The chain runs to 296 residues: Glycine--tRNA ligase alpha subunit (296 aa).

Belongs to the class-II aminoacyl-tRNA synthetase family. As to quaternary structure, tetramer of two alpha and two beta subunits.

The protein resides in the cytoplasm. It catalyses the reaction tRNA(Gly) + glycine + ATP = glycyl-tRNA(Gly) + AMP + diphosphate. The chain is Glycine--tRNA ligase alpha subunit from Polynucleobacter necessarius subsp. necessarius (strain STIR1).